Reading from the N-terminus, the 1203-residue chain is MSKVIKPPGQARTADFRTLERESRFINPPKDKSAFPLLQEAVQPHIGSFNALTEGPDGGLLNLGVKDIGEKVIFDGKPLNSEDEISNSGYLGNKLSVSVEQVSIAKPMSNDGVSSAVERKVYPSESRQRLTSYRGKLLLKLKWSVNNGEENLFEVRDCGGLPVMLQSNRCHLNKMSPYELVQHKEESDEIGGYFIVNGIEKLIRMLIVQRRNHPMAIIRPSFANRGASYSHYGIQIRSVRPDQTSQTNVLHYLNDGQVTFRFSWRKNEYLVPVVMILKALCHTSDREIFDGIIGNDVKDSFLTDRLELLLRGFKKRYPHLQNRTQVLQYLGDKFRVVFQASPDQSDLEVGQEVLDRIVLVHLGKDGSQDKFRMLLFMIRKLYSLVAGECSPDNPDATQHQEVLLGGFLYGMILKEKIDEYLQNIIAQVRMDINRGMAINFKDKRYMSRVLMRVNENIGSKMQYFLSTGNLVSQSGLDLQQVSGYTVVAEKINFYRFISHFRMVHRGSFFAQLKTTTVRKLLPESWGFLCPVHTPDGSPCGLLNHFAHKCRISTQQSDVSRIPSILYSLGVAPASHTFAAGPSLCCVQIDGKIIGWVSHEQGKIIADTLRYWKVEGKTPGLPIDLEIGYVPPSTRGQYPGLYLFGGHSRMLRPVRYLPLDKEDIVGPFEQVYMNIAVTPQEIQNNVHTHVEFTPTNILSILANLTPFSDFNQSPRNMYQCQMGKQTMGTPGVALCHRSDNKLYRLQTGQTPIVKANLYDDYGMDNFPNGFNAVVAVISYTGYDMDDAMIINKSADERGFGYGTMYKTEKVDLALNRNRGDPITQHFGFGNDEWPKEWLEKLDEDGLPYIGTYVEEGDPICAYFDDTLNKTKIKTYHSSEPAYIEEVNLIGDESNKFQELQTVSIKYRIRRTPQIGDKFSSRHGQKGVCSRKWPTIDMPFSETGIQPDIIINPHAFPSRMTIGMFVESLAGKAGALHGIAQDSTPWIFNEDDTPADYFGEQLAKAGYNYHGNEPMYSGATGEELRADIYVGVVYYQRLRHMVNDKFQVRSTGPVNSLTMQPVKGRKRHGGIRVGEMERDALIGHGTSFLLQDRLLNSSDYTQASVCRECGSILTTQQSVPRIGSISTVCCRRCSMRFEDAKKLLTKSEDGEKIFIDDSQIWEDGQGNKFVGGNETTTVAIPFVLKYLDSELSAMGIRLRYNVEPK.

The residue at position 2 (Ser2) is an N-acetylserine. Ser81 carries the post-translational modification Phosphoserine. Residues 1104-1131 (CRECGSILTTQQSVPRIGSISTVCCRRC) form a C4-type zinc finger. Position 1156 is a phosphoserine (Ser1156).

The protein belongs to the RNA polymerase beta chain family. As to quaternary structure, component of the RNA polymerase I (Pol I) complex consisting of 14 subunits: RPA135, RPA190, RPC40, RPA14, RPB5, RPO26, RPA43, RPB8, RPA12, RPB10, RPC19, RPC10, RPA49 and RPA34. The complex is composed of a horseshoe-shaped core containing ten subunits (RPA135, RPA190, RPB5, RPO26, RPB8, RPB10, RPC10, RPA12, RPC19 and RPC40) where RPA135 and RPA190 form the DNA-binding cleft. Outside of the core, RPA14 and RPA43 form the stalk that mediates interactions with transcription initiation factors and newly synthesized RNA.

It localises to the nucleus. The protein resides in the nucleolus. The enzyme catalyses RNA(n) + a ribonucleoside 5'-triphosphate = RNA(n+1) + diphosphate. DNA-dependent RNA polymerases catalyze the transcription of DNA into RNA using the four ribonucleoside triphosphates as substrates. Component of RNA polymerase I (Pol I) which synthesizes ribosomal RNA precursors. Besides, RNA polymerase I has intrinsic RNA cleavage activity. RPA190 and RPA135 both contribute to the polymerase catalytic activity and together form the Pol I active center. In addition, subunit RPA12 contributes a catalytic zinc ribbon that is required for RNA cleavage by Pol I. A single stranded DNA template strand of the promoter is positioned within the central active site cleft of Pol I. A bridging helix emanates from RPA190 and crosses the cleft near the catalytic site and is thought to promote translocation of Pol I by acting as a ratchet that moves the RNA-DNA hybrid through the active site by switching from straight to bent conformations at each step of nucleotide addition. The chain is DNA-directed RNA polymerase I subunit RPA135 (RPA135) from Saccharomyces cerevisiae (strain ATCC 204508 / S288c) (Baker's yeast).